The primary structure comprises 142 residues: uncharacterized protein (142 aa).

The first 20 residues, 1 to 20, serve as a signal peptide directing secretion; that stretch reads MPSVNEFFIFFLIVWHTCEC. N80 carries an N-linked (GlcNAc...) asparagine glycan.

This is an uncharacterized protein from Dictyostelium discoideum (Social amoeba).